Here is a 189-residue protein sequence, read N- to C-terminus: Streptothricin acetyltransferase (189 aa).

Positions 44–189 (FALREVPADP…HALYMSMPCP (146 aa)) constitute an N-acetyltransferase domain. The interval 55–76 (LVKVFPDDGGSDGEDGAEGEDA) is disordered. Over residues 63 to 75 (GGSDGEDGAEGED) the composition is skewed to acidic residues.

This sequence belongs to the acetyltransferase family. GNAT subfamily.

It catalyses the reaction streptothricin F + acetyl-CoA = N(beta)-acetylstreptothricin F + CoA + H(+). In terms of biological role, involved in resistance to streptothricin, a broad-spectrum antibiotic produced by streptomycetes. Detoxifies streptothricin via acetylation of the beta amino group of the first beta-lysyl moiety of streptothricin. This Streptomyces lavendulae protein is Streptothricin acetyltransferase.